The primary structure comprises 698 residues: Protein CRAC (698 aa).

In terms of domain architecture, PH spans 22 to 122 (DVSYSSIMKK…FLTLLIARIR (101 aa)). The segment at 594 to 630 (TGGGSVPSSQSTNNLQSSTSSMSSLSSSSTSTTKRSH) is disordered. Residues 601 to 626 (SSQSTNNLQSSTSSMSSLSSSSTSTT) show a composition bias toward low complexity.

The protein localises to the cytoplasm. Couples activated G protein to adenylyl cyclase signal transduction from surface cAMP receptor. Pianissimo a cytosolic regulator and CRAC, are both essential for activation of the enzyme adenylyl cyclase. Pianissimo and CRAC do not function redundantly. Both proteins are integral components of the adenylyl cyclase activation pathway. This is Protein CRAC (dagA) from Dictyostelium discoideum (Social amoeba).